Consider the following 234-residue polypeptide: Large ribosomal subunit protein uL1 (234 aa).

It belongs to the universal ribosomal protein uL1 family. Part of the 50S ribosomal subunit.

Functionally, binds directly to 23S rRNA. The L1 stalk is quite mobile in the ribosome, and is involved in E site tRNA release. In terms of biological role, protein L1 is also a translational repressor protein, it controls the translation of the L11 operon by binding to its mRNA. The protein is Large ribosomal subunit protein uL1 of Aliivibrio fischeri (strain MJ11) (Vibrio fischeri).